The following is a 530-amino-acid chain: Glucocorticoid modulatory element-binding protein 2 (530 aa).

Residues 81 to 163 enclose the SAND domain; the sequence is EEGENLEAEI…RKIMDSGELD (83 aa). Cys110 contacts Zn(2+). DNA-binding residues include Lys136, Lys140, Lys143, and Arg154. Lys155 participates in a covalent cross-link: Glycyl lysine isopeptide (Lys-Gly) (interchain with G-Cter in SUMO1); alternate. A Glycyl lysine isopeptide (Lys-Gly) (interchain with G-Cter in SUMO2); alternate cross-link involves residue Lys155. Residues His167, Cys171, and Cys175 each contribute to the Zn(2+) site. Coiled coils occupy residues 245–270 and 304–344; these read LLDEVIQEFQQELEETMKGLQQRVQD and QMDR…SNVL. Ser373 is subject to Phosphoserine.

As to quaternary structure, homodimer, and heterodimer of GMEB1 and GMEB2. Interacts with the glucocorticoid receptor (NR3C1). May interact with CREB-binding protein (CBP).

It is found in the nucleus. Its subcellular location is the cytoplasm. In terms of biological role, trans-acting factor that binds to glucocorticoid modulatory elements (GME) present in the TAT (tyrosine aminotransferase) promoter and increases sensitivity to low concentrations of glucocorticoids. Also binds to the transferrin receptor promoter. The sequence is that of Glucocorticoid modulatory element-binding protein 2 (Gmeb2) from Mus musculus (Mouse).